A 662-amino-acid polypeptide reads, in one-letter code: DCC-interacting protein 13-beta (662 aa).

The tract at residues 1–428 (MPAVDKLLLE…NSDIEDDNIV (428 aa)) is required for RAB5A binding. The 266-residue stretch at 3-268 (AVDKLLLEEA…ESVYTPDIDV (266 aa)) folds into the BAR domain. The PH domain maps to 277–375 (LIQKTGYLNL…WICAVNNISR (99 aa)). In terms of domain architecture, PID spans 486 to 635 (SLLQQMFIVR…LMLSVPLTND (150 aa)). The disordered stretch occupies residues 642–662 (NDQADDTGGSPSENRGAESEA).

Homodimer. Homotetramer. Binds RAB5A/Rab5 through an N-terminal domain. This interaction is essential for its recruitment to endosomal membranes as well as its role in cell proliferation. Binds subunits of the NuRD/MeCP1 complex. Interacts with FSHR; interaction is independent of follicle stimulating hormone stimulation. Interacts with APPL1; the interaction is decreased by adiponectin in a time-dependent manner. Forms a complex comprising APPL1, RUVBL2, CTNNB1, HDAC1 and HDAC2; interaction reduces interaction between CTNNB1, HDAC1, HDAC2 and RUVBL2 leading to the decrease of deacetylase activity of this complex; affects the recruitment of repressive complexes to the Wnt target genes. Interacts (via BAR domain) with TBC1D1; interaction is dependent of TBC1D1 phosphorylation at 'Ser-235'; interaction diminishes the phosphorylation of TBC1D1 at 'Thr-596', resulting in inhibition of SLC2A4 translocation and glucose uptake. Interacts with ANXA2; targets APPL2 to endosomes and acting in parallel to RAB5A. Interacts with RAB31 (in GTP-bound form); interaction contributes to or enhances recruitment of APPL2 to the phagosomes; interaction enhances Fc-gamma receptor-mediated phagocytosis through PI3K/Akt signaling in macrophages. Interacts with PIK3R1; forms a complex with PIK3R1 and APPL1. Interacts (via BAR domain) with ADIPOR1; hinders the accessibility of APPL1 to ADIPOR1; negatively regulates adiponectin signaling; ADIPOQ dissociates this interaction and facilitates the recruitment of APPL1 to ADIPOR1. Interacts (via BAR domain) with ADIPOR2; ADIPOQ dissociates this interaction. As to expression, expressed in insulin-target tissues including skeletal muscle, liver, fat, and brain. Highly expressed in kidney and pancreas. Abundantly expressed in the ventromedial hypothalamus (VMH), barely detectable in the arcuate nucleus (ARC) and paraventricular nucleus (PVN) of the hypothalamus. Also expressed in pancreatic beta-cells.

Its subcellular location is the early endosome membrane. It localises to the nucleus. It is found in the cell membrane. The protein resides in the endosome membrane. The protein localises to the cytoplasm. Its subcellular location is the cytoplasmic vesicle. It localises to the phagosome. It is found in the cell projection. The protein resides in the ruffle. The protein localises to the ruffle membrane. Its subcellular location is the phagosome membrane. In terms of biological role, multifunctional adapter protein that binds to various membrane receptors, nuclear factors and signaling proteins to regulate many processes, such as cell proliferation, immune response, endosomal trafficking and cell metabolism. Regulates signaling pathway leading to cell proliferation through interaction with RAB5A and subunits of the NuRD/MeCP1 complex. Plays a role in immune response by modulating phagocytosis, inflammatory and innate immune responses. In macrophages, enhances Fc-gamma receptor-mediated phagocytosis through interaction with RAB31 leading to activation of PI3K/Akt signaling. In response to LPS, modulates inflammatory responses by playing a key role on the regulation of TLR4 signaling and in the nuclear translocation of RELA/NF-kappa-B p65 and the secretion of pro- and anti-inflammatory cytokines. Also functions as a negative regulator of innate immune response via inhibition of AKT1 signaling pathway by forming a complex with APPL1 and PIK3R1. Plays a role in endosomal trafficking of TGFBR1 from the endosomes to the nucleus. Plays a role in cell metabolism by regulating adiponectin and insulin signaling pathways and adaptative thermogenesis. In muscle, negatively regulates adiponectin-simulated glucose uptake and fatty acid oxidation by inhibiting adiponectin signaling pathway through APPL1 sequestration thereby antagonizing APPL1 action. In muscles, negatively regulates insulin-induced plasma membrane recruitment of GLUT4 and glucose uptake through interaction with TBC1D1. Plays a role in cold and diet-induced adaptive thermogenesis by activating ventromedial hypothalamus (VMH) neurons throught AMPK inhibition which enhances sympathetic outflow to subcutaneous white adipose tissue (sWAT), sWAT beiging and cold tolerance. Also plays a role in other signaling pathways namely Wnt/beta-catenin, HGF and glucocorticoid receptor signaling. Positive regulator of beta-catenin/TCF-dependent transcription through direct interaction with RUVBL2/reptin resulting in the relief of RUVBL2-mediated repression of beta-catenin/TCF target genes by modulating the interactions within the beta-catenin-reptin-HDAC complex. May affect adult neurogenesis in hippocampus and olfactory system via regulating the sensitivity of glucocorticoid receptor. Required for fibroblast migration through HGF cell signaling. The chain is DCC-interacting protein 13-beta from Mus musculus (Mouse).